Here is a 149-residue protein sequence, read N- to C-terminus: Large ribosomal subunit protein uL13 (149 aa).

It belongs to the universal ribosomal protein uL13 family. Part of the 50S ribosomal subunit.

In terms of biological role, this protein is one of the early assembly proteins of the 50S ribosomal subunit, although it is not seen to bind rRNA by itself. It is important during the early stages of 50S assembly. This Chlorobium phaeobacteroides (strain DSM 266 / SMG 266 / 2430) protein is Large ribosomal subunit protein uL13.